The sequence spans 622 residues: Apical membrane antigen 1 (622 aa).

An N-terminal signal peptide occupies residues 1-24 (MRKLYCVLLLSAFEFTYMINFGRG). At 25–546 (QNYWEHPYQN…EHKPTYDNMK (522 aa)) the chain is on the extracellular side. 5 disulfides stabilise this stretch: C149–C302, C217–C247, C263–C275, C320–C418, and C337–C409. N162 carries an N-linked (GlcNAc...) asparagine glycan. N-linked (GlcNAc...) asparagine glycosylation is found at N286, N371, N421, N422, and N499. Disulfide bonds link C443/C502, C490/C507, and C492/C509. Residues 547–567 (IIIASSAAVAVLATILMVYLY) traverse the membrane as a helical segment. At 568 to 622 (KRKGNAEKYDKMDQPQDYGKSTSRNDEMLDPEASFWGEEKRASHTTPVLMEKPYY) the chain is on the cytoplasmic side. Positions 577–607 (DKMDQPQDYGKSTSRNDEMLDPEASFWGEEK) are disordered.

The protein belongs to the apicomplexan parasites AMA1 family.

It localises to the membrane. In terms of biological role, involved in parasite invasion of erythrocytes. The polypeptide is Apical membrane antigen 1 (AMA-1) (Plasmodium falciparum (isolate Camp / Malaysia)).